Consider the following 70-residue polypeptide: Gas vesicle protein A (70 aa).

The protein belongs to the gas vesicle GvpA family. In terms of assembly, the gas vesicle shell is 2 nm thick and consists of a single layer of this protein. It forms helical ribs nearly perpendicular to the long axis of the vesicle.

The protein localises to the gas vesicle shell. In terms of biological role, gas vesicles are hollow, gas filled proteinaceous nanostructures found in some microorganisms. During planktonic growth they allow positioning of the organism at a favorable depth for light or nutrient acquisition. GvpA forms the protein shell. The chain is Gas vesicle protein A from Ancylobacter aquaticus.